The chain runs to 146 residues: Flavodoxin (146 aa).

Residues 4 to 143 (SLIVYGSTTG…EIVSWGSGIA (140 aa)) enclose the Flavodoxin-like domain.

It belongs to the flavodoxin family. FMN serves as cofactor.

Its function is as follows. Low-potential electron donor to a number of redox enzymes. The chain is Flavodoxin from Maridesulfovibrio salexigens (strain ATCC 14822 / DSM 2638 / NCIMB 8403 / VKM B-1763) (Desulfovibrio salexigens).